Consider the following 246-residue polypeptide: Ly6/PLAUR domain-containing protein 4 (246 aa).

Positions 1-26 are cleaved as a signal peptide; it reads MILQAWRSLQLLYLLEAISLLPCTEA. N-linked (GlcNAc...) asparagine glycosylation is present at Asn117. Residues 142–223 enclose the UPAR/Ly6 domain; that stretch reads CPSCVGKHDQ…INVLDKSEAV (82 aa). The GPI-anchor amidated alanine moiety is linked to residue Ala225. The propeptide at 226-246 is removed in mature form; that stretch reads GHCSQGISWSVLLCLLILLRD.

It localises to the cell membrane. This Mus musculus (Mouse) protein is Ly6/PLAUR domain-containing protein 4 (Lypd4).